The primary structure comprises 111 residues: MIWLTLVFASLLSVAGQLCQKQATCFVAINKRRKHIVLWLGLALACLGLAMMLWLLVLQNVPVGIAYPMLSLNFVWVTLAAVKLWHEPVSPRHWCGVAFIIGGIVILGSTV.

The next 3 membrane-spanning stretches (helical) occupy residues 36–56 (IVLW…LWLL), 61–81 (VPVG…TLAA), and 88–108 (PVSP…VILG). Residues 40 to 109 (LGLALACLGL…IIGGIVILGS (70 aa)) enclose the EamA domain.

It belongs to the ArnE family. As to quaternary structure, heterodimer of ArnE and ArnF.

The protein resides in the cell inner membrane. It functions in the pathway bacterial outer membrane biogenesis; lipopolysaccharide biosynthesis. Its function is as follows. Translocates 4-amino-4-deoxy-L-arabinose-phosphoundecaprenol (alpha-L-Ara4N-phosphoundecaprenol) from the cytoplasmic to the periplasmic side of the inner membrane. The chain is Probable 4-amino-4-deoxy-L-arabinose-phosphoundecaprenol flippase subunit ArnE from Shigella flexneri.